Here is a 554-residue protein sequence, read N- to C-terminus: Zinc finger protein syd-9 (554 aa).

C2H2-type zinc fingers lie at residues 20–43, 65–87, and 93–116; these read LTCP…QMFH, FICE…RSVH, and YVCK…LKHH. Disordered regions lie at residues 136–158, 298–319, and 342–383; these read KIVT…TATP, SPDT…PPMA, and ASGQ…CPSP. The span at 142–158 shows a compositional bias: low complexity; sequence NGPTTNGSTPTTSTATP. Polar residues-rich tracts occupy residues 351 to 360 and 370 to 379; these read PDSTDTQKGC and SDPSTSSGDS. The C2H2-type 4 zinc-finger motif lies at 387–410; the sequence is LHCKECGTLVRKSSHLPIHMTMSH. Positions 516-554 are disordered; sequence RMEMSLSPIKPFQQRFSRERSSSSSVERSPSRERSRSPL. Positions 544 to 554 are enriched in basic and acidic residues; it reads SPSRERSRSPL.

In terms of tissue distribution, expressed mainly in body wall muscles and ventral cord motoneurons.

The protein resides in the nucleus. It is found in the nucleus speckle. In terms of biological role, plays a role in regulating synaptic function, probably by modulation of endocytosis. May be dispensable in muscle for normal locomotion. May be involved in post-transcriptional mRNA processing, in parallel with unc-75. The sequence is that of Zinc finger protein syd-9 from Caenorhabditis elegans.